We begin with the raw amino-acid sequence, 306 residues long: MKISLVVPVFNEEEAIPIFYKTVREFEELKSYEVEIVFINDGSKDATESIINALAVSDPLVVPLSFTRNFGKEPALFAGLDHATGDAIIPIDVDLQDPIEVIPHLIEKWQAGADMVLAKRSDRSTDGRLKRKTAEWFYKLHNKISNPKIEENVGDFRLMSRDVVENIKLMPERNLFMKGILSWVGGKTDIVEYVRAERIAGDTKFNGWKLWNLALEGITSFSTFPLRIWTYIGLVVASVAFIYGAWMILDTIIFGNAVRGYPSLLVSILFLGGIQMIGIGVLGEYIGRTYIETKKRPKYIIKRVKK.

Residues 1–227 (MKISLVVPVF…ITSFSTFPLR (227 aa)) lie on the Cytoplasmic side of the membrane. The chain crosses the membrane as a helical span at residues 228 to 248 (IWTYIGLVVASVAFIYGAWMI). Residues 249 to 262 (LDTIIFGNAVRGYP) are Periplasmic-facing. The chain crosses the membrane as a helical span at residues 263–283 (SLLVSILFLGGIQMIGIGVLG). Residues 284-306 (EYIGRTYIETKKRPKYIIKRVKK) lie on the Cytoplasmic side of the membrane.

It belongs to the glycosyltransferase 2 family. GtrB subfamily.

The protein localises to the cell inner membrane. Involved in O antigen modification. Catalyzes the transfer of the glucose residue from UDP-glucose to a lipid carrier. The sequence is that of Prophage bactoprenol glucosyl transferase homolog (yfdH) from Escherichia coli (strain K12).